The following is a 564-amino-acid chain: Dihydroxy-acid dehydratase (564 aa).

Asp-80 lines the Mg(2+) pocket. Cys-121 contributes to the [2Fe-2S] cluster binding site. 2 residues coordinate Mg(2+): Asp-122 and Lys-123. At Lys-123 the chain carries N6-carboxylysine. Cys-194 serves as a coordination point for [2Fe-2S] cluster. Glu-447 is a binding site for Mg(2+). The active-site Proton acceptor is the Ser-473.

The protein belongs to the IlvD/Edd family. As to quaternary structure, homodimer. [2Fe-2S] cluster serves as cofactor. Mg(2+) is required as a cofactor.

It carries out the reaction (2R)-2,3-dihydroxy-3-methylbutanoate = 3-methyl-2-oxobutanoate + H2O. It catalyses the reaction (2R,3R)-2,3-dihydroxy-3-methylpentanoate = (S)-3-methyl-2-oxopentanoate + H2O. It functions in the pathway amino-acid biosynthesis; L-isoleucine biosynthesis; L-isoleucine from 2-oxobutanoate: step 3/4. It participates in amino-acid biosynthesis; L-valine biosynthesis; L-valine from pyruvate: step 3/4. Its function is as follows. Functions in the biosynthesis of branched-chain amino acids. Catalyzes the dehydration of (2R,3R)-2,3-dihydroxy-3-methylpentanoate (2,3-dihydroxy-3-methylvalerate) into 2-oxo-3-methylpentanoate (2-oxo-3-methylvalerate) and of (2R)-2,3-dihydroxy-3-methylbutanoate (2,3-dihydroxyisovalerate) into 2-oxo-3-methylbutanoate (2-oxoisovalerate), the penultimate precursor to L-isoleucine and L-valine, respectively. The sequence is that of Dihydroxy-acid dehydratase from Listeria monocytogenes serotype 4b (strain CLIP80459).